Reading from the N-terminus, the 153-residue chain is Aminoglycoside N(6')-acetyltransferase type 1 (153 aa).

The region spanning 6 to 153 is the N-acetyltransferase domain; the sequence is PTIRQATPAD…YFRMPLEPSA (148 aa). 5 residues coordinate substrate: Trp-27, Tyr-70, Glu-83, Asp-119, and Glu-140.

As to quaternary structure, homodimer.

The enzyme catalyses kanamycin B + acetyl-CoA = N(6')-acetylkanamycin B + CoA + H(+). Functionally, catalyzes the transfer of an acetyl group from acetyl-CoA to the 6'-amino group of aminoglycoside molecules conferring resistance to antibiotics containing the purpurosamine ring including amikacin, gentamicin, kanamycin B, tobramycin, netilmicin, and isepamicin. In Stenotrophomonas maltophilia (Pseudomonas maltophilia), this protein is Aminoglycoside N(6')-acetyltransferase type 1.